The primary structure comprises 350 residues: Small ribosomal subunit biogenesis GTPase RsgA (350 aa).

Polar residues predominate over residues 1–17 (MSKNKLSKGQQRRVNAN). Positions 1-33 (MSKNKLSKGQQRRVNANHQRRLKTSKEKPDYDD) are disordered. Residues 104-273 (TSVLTRPDFY…VIDSPGVREF (170 aa)) form the CP-type G domain. Residues 160-163 (NKID) and 214-222 (GQSGVGKSS) each bind GTP. Cys297, Cys302, His304, and Cys310 together coordinate Zn(2+).

The protein belongs to the TRAFAC class YlqF/YawG GTPase family. RsgA subfamily. In terms of assembly, monomer. Associates with 30S ribosomal subunit, binds 16S rRNA. Requires Zn(2+) as cofactor.

It localises to the cytoplasm. Its function is as follows. One of several proteins that assist in the late maturation steps of the functional core of the 30S ribosomal subunit. Helps release RbfA from mature subunits. May play a role in the assembly of ribosomal proteins into the subunit. Circularly permuted GTPase that catalyzes slow GTP hydrolysis, GTPase activity is stimulated by the 30S ribosomal subunit. This Shigella boydii serotype 18 (strain CDC 3083-94 / BS512) protein is Small ribosomal subunit biogenesis GTPase RsgA.